The primary structure comprises 874 residues: Alanine--tRNA ligase (874 aa).

4 residues coordinate Zn(2+): histidine 562, histidine 566, cysteine 664, and histidine 668.

This sequence belongs to the class-II aminoacyl-tRNA synthetase family. The cofactor is Zn(2+).

Its subcellular location is the cytoplasm. The catalysed reaction is tRNA(Ala) + L-alanine + ATP = L-alanyl-tRNA(Ala) + AMP + diphosphate. Its function is as follows. Catalyzes the attachment of alanine to tRNA(Ala) in a two-step reaction: alanine is first activated by ATP to form Ala-AMP and then transferred to the acceptor end of tRNA(Ala). Also edits incorrectly charged Ser-tRNA(Ala) and Gly-tRNA(Ala) via its editing domain. In Neisseria meningitidis serogroup A / serotype 4A (strain DSM 15465 / Z2491), this protein is Alanine--tRNA ligase.